Reading from the N-terminus, the 60-residue chain is LKCNKLIPLAYKTCPAGKDLCYKMYMVSNKTVPVKRGCIDVCPKNSLLVKYECCNTDRCN.

4 disulfides stabilise this stretch: C3–C21, C14–C38, C42–C53, and C54–C59.

This sequence belongs to the three-finger toxin family. Short-chain subfamily. Type IA cytotoxin sub-subfamily. As to quaternary structure, monomer in solution; Homodimer and oligomer in the presence of negatively charged lipids forming a pore with a size ranging between 20 and 30 Angstroms. Expressed by the venom gland.

The protein resides in the secreted. Its subcellular location is the target cell membrane. Its function is as follows. Shows cytolytic activity on many different cells by forming pore in lipid membranes. In vivo, increases heart rate or kills the animal by cardiac arrest. In addition, it binds to heparin with high affinity, interacts with Kv channel-interacting protein 1 (KCNIP1) in a calcium-independent manner, and binds to integrin alpha-V/beta-3 (ITGAV/ITGB3) with moderate affinity. Preferentially binds acidic phospholipids like phosphatidylserine, phosphatidic acid and phosphatidyl glycerol. Has hemolytic activity towards human erythrocytes (EC(50)=0.171 uM) and cytolytic activity towards various cell lines. The sequence is that of Cytotoxin 7 from Naja naja (Indian cobra).